The primary structure comprises 194 residues: Interleukin-17C (194 aa).

The first 16 residues, 1-16, serve as a signal peptide directing secretion; it reads MSLLLLGWLPTGMTHQ. Intrachain disulfides connect cysteine 125–cysteine 185 and cysteine 130–cysteine 187.

The protein belongs to the IL-17 family. As to quaternary structure, binds to a heterodimer formed by IL17RA and IL17RE. Expressed by epithelial cells after bacterial challenge. Low expression, if any, in lymphocytes.

The protein localises to the secreted. Functionally, cytokine that plays a crucial role in innate immunity of the epithelium, including to intestinal bacterial pathogens, in an autocrine manner. Stimulates the production of antibacterial peptides and pro-inflammatory molecules for host defense by signaling through the NFKB and MAPK pathways. Acts synergically with IL22, TNF and IL1B in inducing antibacterial peptides. May have protective function by maintaining epithelial homeostasis after an inflammatory challenge, such as that caused in the intestine by dextran sulfate sodium in a colitis model. May also promote an inflammatory phenotype, such as skin in a psoriasis model. Enhanced IL17C/IL17RE signaling may also lead to greater susceptibility to autoimmune diseases, such as autoimmune encephalitis. The protein is Interleukin-17C (Il17c) of Mus musculus (Mouse).